Reading from the N-terminus, the 90-residue chain is uncharacterized protein (90 aa).

This is an uncharacterized protein from Escherichia coli (Bacteriophage T3).